A 177-amino-acid polypeptide reads, in one-letter code: Large ribosomal subunit protein uL6 (177 aa).

This sequence belongs to the universal ribosomal protein uL6 family. In terms of assembly, part of the 50S ribosomal subunit.

Functionally, this protein binds to the 23S rRNA, and is important in its secondary structure. It is located near the subunit interface in the base of the L7/L12 stalk, and near the tRNA binding site of the peptidyltransferase center. The protein is Large ribosomal subunit protein uL6 of Idiomarina loihiensis (strain ATCC BAA-735 / DSM 15497 / L2-TR).